The following is a 472-amino-acid chain: Argininosuccinate lyase (472 aa).

The protein belongs to the lyase 1 family. Argininosuccinate lyase subfamily.

It is found in the cytoplasm. The catalysed reaction is 2-(N(omega)-L-arginino)succinate = fumarate + L-arginine. It functions in the pathway amino-acid biosynthesis; L-arginine biosynthesis; L-arginine from L-ornithine and carbamoyl phosphate: step 3/3. This is Argininosuccinate lyase from Polynucleobacter asymbioticus (strain DSM 18221 / CIP 109841 / QLW-P1DMWA-1) (Polynucleobacter necessarius subsp. asymbioticus).